We begin with the raw amino-acid sequence, 383 residues long: Succinyl-diaminopimelate desuccinylase (383 aa).

Position 74 (histidine 74) interacts with Zn(2+). Residue aspartate 76 is part of the active site. Aspartate 107 is a Zn(2+) binding site. Glutamate 141 functions as the Proton acceptor in the catalytic mechanism. Positions 142, 170, and 356 each coordinate Zn(2+).

Belongs to the peptidase M20A family. DapE subfamily. As to quaternary structure, homodimer. It depends on Zn(2+) as a cofactor. Requires Co(2+) as cofactor.

It catalyses the reaction N-succinyl-(2S,6S)-2,6-diaminopimelate + H2O = (2S,6S)-2,6-diaminopimelate + succinate. It functions in the pathway amino-acid biosynthesis; L-lysine biosynthesis via DAP pathway; LL-2,6-diaminopimelate from (S)-tetrahydrodipicolinate (succinylase route): step 3/3. Functionally, catalyzes the hydrolysis of N-succinyl-L,L-diaminopimelic acid (SDAP), forming succinate and LL-2,6-diaminopimelate (DAP), an intermediate involved in the bacterial biosynthesis of lysine and meso-diaminopimelic acid, an essential component of bacterial cell walls. This is Succinyl-diaminopimelate desuccinylase from Polynucleobacter necessarius subsp. necessarius (strain STIR1).